The primary structure comprises 277 residues: Protein PTST, chloroplastic (277 aa).

A chloroplast-targeting transit peptide spans 1-44 (MGCVPRIEFGCSSQSLTLSWNLRAWNLCRLNTISHFQKLPYPLV). Residues 95–152 (DTERSKLVKKLSEANQQNRFLKRQLKTQEHEITNIKTELALMELEVQALVKLAEEIAN) adopt a coiled-coil conformation.

Interacts with GBSS1.

It is found in the plastid. Its subcellular location is the chloroplast stroma. In terms of biological role, involved in targeting GBSS1 to the starch granule. Was originally thought to be a carbohydrate-binding scaffold protein, but it has been shown that it is mainly found as a soluble protein and that interaction with GBSS1 is a pre-requisite for subsequent starch granule binding. Dissociation from starch as a function of pH, Mg(2+) concentration or redox state is not observed. Interacts primarily with amylopectin and is required for amylose synthesis. In Arabidopsis thaliana (Mouse-ear cress), this protein is Protein PTST, chloroplastic.